A 353-amino-acid chain; its full sequence is Melatonin receptor type 1A (353 aa).

The Extracellular segment spans residues 1-32 (MKGNVSELLNATQQAPGGGEGGRPRPSWLAST). N-linked (GlcNAc...) asparagine glycans are attached at residues Asn4 and Asn10. A helical membrane pass occupies residues 33-53 (LAFILIFTIVVDILGNLLVIL). Over 54–66 (SVYRNKKLRNSGN) the chain is Cytoplasmic. The helical transmembrane segment at 67–87 (IFVVSLAVADLVVAVYPYPLV) threads the bilayer. Topologically, residues 88–105 (LTSILNNGWNLGYLHCQV) are extracellular. Cys103 and Cys180 are disulfide-bonded. A helical membrane pass occupies residues 106–126 (SAFLMGLSVIGSIFNITGIAM). Over 127 to 145 (NRYCYICHSLKYDKIYSNK) the chain is Cytoplasmic. Residues 146–166 (NSLCYVFLIWMLTLIAIMPNL) form a helical membrane-spanning segment. The Extracellular segment spans residues 167-190 (QTGTLQYDPRIYSCTFTQSVSSAY). Residues 191 to 211 (TIAVVVFHFIVPMIIVIFCYL) traverse the membrane as a helical segment. The Cytoplasmic portion of the chain corresponds to 212–243 (RIWVLVLQVRRRVKPDNKPKLKPQDFRNFVTM). A helical transmembrane segment spans residues 244 to 264 (FVVFVLFAICWAPLNLIGLIV). Topologically, residues 265–277 (ASDPATMVPRIPE) are extracellular. A helical transmembrane segment spans residues 278 to 298 (WLFVASYYLAYFNSCLNAIIY). Residues 299 to 353 (GLLNQNFRKEYKKIIVSLCTAKMFFVESSNEEADKIKCKPSPLIPNNNLIKVDSV) are Cytoplasmic-facing.

This sequence belongs to the G-protein coupled receptor 1 family.

It is found in the cell membrane. In terms of biological role, high affinity receptor for melatonin. Likely to mediate the reproductive and circadian actions of melatonin. The activity of this receptor is mediated by pertussis toxin sensitive G proteins that inhibit adenylate cyclase activity. Possibly involved in sleep induction, by melatonin activation of the potassium channel KCNMA1/BK and the dissociation of G-beta and G-gamma subunits, thereby decreasing synaptic transmission. This is Melatonin receptor type 1A (Mtnr1a) from Mus musculus (Mouse).